Here is a 317-residue protein sequence, read N- to C-terminus: 4-hydroxy-3-methylbut-2-enyl diphosphate reductase (317 aa).

A [4Fe-4S] cluster-binding site is contributed by cysteine 12. (2E)-4-hydroxy-3-methylbut-2-enyl diphosphate contacts are provided by histidine 41 and histidine 74. Residues histidine 41 and histidine 74 each coordinate dimethylallyl diphosphate. Positions 41 and 74 each coordinate isopentenyl diphosphate. Cysteine 97 provides a ligand contact to [4Fe-4S] cluster. Histidine 125 contacts (2E)-4-hydroxy-3-methylbut-2-enyl diphosphate. Dimethylallyl diphosphate is bound at residue histidine 125. Histidine 125 lines the isopentenyl diphosphate pocket. Glutamate 127 serves as the catalytic Proton donor. Threonine 168 contacts (2E)-4-hydroxy-3-methylbut-2-enyl diphosphate. Cysteine 198 is a [4Fe-4S] cluster binding site. Residues serine 226, serine 227, asparagine 228, and serine 270 each coordinate (2E)-4-hydroxy-3-methylbut-2-enyl diphosphate. Dimethylallyl diphosphate is bound by residues serine 226, serine 227, asparagine 228, and serine 270. 4 residues coordinate isopentenyl diphosphate: serine 226, serine 227, asparagine 228, and serine 270.

The protein belongs to the IspH family. In terms of assembly, homodimer. [4Fe-4S] cluster is required as a cofactor.

It catalyses the reaction isopentenyl diphosphate + 2 oxidized [2Fe-2S]-[ferredoxin] + H2O = (2E)-4-hydroxy-3-methylbut-2-enyl diphosphate + 2 reduced [2Fe-2S]-[ferredoxin] + 2 H(+). It carries out the reaction dimethylallyl diphosphate + 2 oxidized [2Fe-2S]-[ferredoxin] + H2O = (2E)-4-hydroxy-3-methylbut-2-enyl diphosphate + 2 reduced [2Fe-2S]-[ferredoxin] + 2 H(+). It functions in the pathway isoprenoid biosynthesis; dimethylallyl diphosphate biosynthesis; dimethylallyl diphosphate from (2E)-4-hydroxy-3-methylbutenyl diphosphate: step 1/1. Its pathway is isoprenoid biosynthesis; isopentenyl diphosphate biosynthesis via DXP pathway; isopentenyl diphosphate from 1-deoxy-D-xylulose 5-phosphate: step 6/6. Catalyzes the conversion of 1-hydroxy-2-methyl-2-(E)-butenyl 4-diphosphate (HMBPP) into a mixture of isopentenyl diphosphate (IPP) and dimethylallyl diphosphate (DMAPP). Acts in the terminal step of the DOXP/MEP pathway for isoprenoid precursor biosynthesis. In Serratia proteamaculans (strain 568), this protein is 4-hydroxy-3-methylbut-2-enyl diphosphate reductase.